Reading from the N-terminus, the 591-residue chain is L-fucose isomerase (591 aa).

Active-site proton acceptor residues include E337 and D361. Mn(2+) is bound by residues E337, D361, and H528.

This sequence belongs to the L-fucose isomerase family. Homohexamer. Mn(2+) is required as a cofactor.

It localises to the cytoplasm. It carries out the reaction L-fucose = L-fuculose. The protein operates within carbohydrate degradation; L-fucose degradation; L-lactaldehyde and glycerone phosphate from L-fucose: step 1/3. In terms of biological role, converts the aldose L-fucose into the corresponding ketose L-fuculose. The sequence is that of L-fucose isomerase from Escherichia coli O139:H28 (strain E24377A / ETEC).